A 226-amino-acid chain; its full sequence is Neuron-specific vesicular protein calcyon (226 aa).

The tract at residues 1–21 (MVKLGCSFSGKPGKEAGDQDG) is disordered. Over 1–88 (MVKLGCSFSG…EEGRRLPTAR (88 aa)) the chain is Extracellular. Residues 89 to 109 (MIAFAMALLGCVLIMYKAIWY) traverse the membrane as a helical segment. Residues 110-226 (DQFTCPDGFL…AEGVPSQPPK (117 aa)) are Cytoplasmic-facing. Residues 177-226 (HKGTTPAAMAVSTAAAAAAAEGTEPSGKSLDTREKEDPQKAEGVPSQPPK) form a disordered region. Over residues 183-196 (AAMAVSTAAAAAAA) the composition is skewed to low complexity. Basic and acidic residues predominate over residues 206-216 (LDTREKEDPQK).

Belongs to the NSG family. In terms of assembly, interacts with CLTA. In terms of tissue distribution, most abundant in brain. Also expressed in testis and ovary and, at much lower levels, in kidney and heart.

The protein localises to the cytoplasmic vesicle membrane. Its subcellular location is the cell membrane. In terms of biological role, interacts with clathrin light chain A and stimulates clathrin self-assembly and clathrin-mediated endocytosis. In Mus musculus (Mouse), this protein is Neuron-specific vesicular protein calcyon (Caly).